We begin with the raw amino-acid sequence, 57 residues long: uncharacterized protein (57 aa).

The chain crosses the membrane as a helical span at residues 24–44 (LWVTLLLTMFFTAVEIIGGLI).

It to cation A.eutrophus efflux system protein CzcD.

The protein localises to the cell membrane. This is an uncharacterized protein from Bacillus caldolyticus.